The sequence spans 464 residues: UPF0210 protein Cgl1545/cg1743 (464 aa).

It belongs to the UPF0210 family. Homodimer.

The chain is UPF0210 protein Cgl1545/cg1743 from Corynebacterium glutamicum (strain ATCC 13032 / DSM 20300 / JCM 1318 / BCRC 11384 / CCUG 27702 / LMG 3730 / NBRC 12168 / NCIMB 10025 / NRRL B-2784 / 534).